The sequence spans 259 residues: Probable ABC transporter arginine-binding protein ArtJ (259 aa).

The first 25 residues, 1-25, serve as a signal peptide directing secretion; sequence MIKQIGRFFRAFIFIMPLSLTSCES. The L-arginine site is built by Asn-38, Glu-45, Ala-96, Gly-97, Ser-99, Arg-104, and Phe-149.

Belongs to the bacterial solute-binding protein 3 family.

Its subcellular location is the secreted. The protein resides in the cell surface. Probably part of an ABC transporter complex involved in arginine transport. Binds arginine. Interacts with host epithelial cells, suggesting a role in host-cell adhesion during infection. In Chlamydia pneumoniae (Chlamydophila pneumoniae), this protein is Probable ABC transporter arginine-binding protein ArtJ.